An 84-amino-acid chain; its full sequence is Inactive transposase YbfQ (84 aa).

The polypeptide is Inactive transposase YbfQ (ybfQ) (Escherichia coli (strain K12)).